A 157-amino-acid chain; its full sequence is Endoribonuclease YbeY (157 aa).

Zn(2+) is bound by residues H122, H126, and H132.

This sequence belongs to the endoribonuclease YbeY family. Zn(2+) is required as a cofactor.

It localises to the cytoplasm. Its function is as follows. Single strand-specific metallo-endoribonuclease involved in late-stage 70S ribosome quality control and in maturation of the 3' terminus of the 16S rRNA. This is Endoribonuclease YbeY from Lysinibacillus sphaericus (strain C3-41).